The following is a 445-amino-acid chain: Anthranilate N-benzoyltransferase protein 3 (445 aa).

Catalysis depends on proton acceptor residues H164 and D392.

It belongs to the plant acyltransferase family. Post-translationally, N-terminus is blocked.

It catalyses the reaction anthranilate + benzoyl-CoA = N-benzoylanthranilate + CoA. The protein operates within phytoalexin biosynthesis; methoxydianthramide B biosynthesis. In terms of biological role, catalyzes the formation of N-benzoylanthranilate, in the course of methoxydianthramide B, a phytoalexin. Phytoalexins are produced in response to infection by parasites, and are essential for the expression of disease resistance. The polypeptide is Anthranilate N-benzoyltransferase protein 3 (HCBT3) (Dianthus caryophyllus (Carnation)).